A 190-amino-acid chain; its full sequence is Shikimate kinase (190 aa).

An ATP-binding site is contributed by 13-18 (GSGKTT). T17 contributes to the Mg(2+) binding site. Substrate contacts are provided by D35, R59, and G81. ATP is bound at residue R119. Residue R138 coordinates substrate. Q155 contributes to the ATP binding site.

Belongs to the shikimate kinase family. Monomer. Mg(2+) is required as a cofactor.

The protein resides in the cytoplasm. The catalysed reaction is shikimate + ATP = 3-phosphoshikimate + ADP + H(+). It participates in metabolic intermediate biosynthesis; chorismate biosynthesis; chorismate from D-erythrose 4-phosphate and phosphoenolpyruvate: step 5/7. In terms of biological role, catalyzes the specific phosphorylation of the 3-hydroxyl group of shikimic acid using ATP as a cosubstrate. This Nitrosococcus oceani (strain ATCC 19707 / BCRC 17464 / JCM 30415 / NCIMB 11848 / C-107) protein is Shikimate kinase.